We begin with the raw amino-acid sequence, 215 residues long: Recombination protein RecR (215 aa).

The C4-type zinc finger occupies 74 to 89; the sequence is CQRCGHLSADPICDIC. Residues 97–191 enclose the Toprim domain; that stretch reads GVICVVADSR…RVTRIAYGLP (95 aa).

The protein belongs to the RecR family.

May play a role in DNA repair. It seems to be involved in an RecBC-independent recombinational process of DNA repair. It may act with RecF and RecO. The sequence is that of Recombination protein RecR from Synechococcus sp. (strain RCC307).